A 104-amino-acid polypeptide reads, in one-letter code: Large ribosomal subunit protein uL24 (104 aa).

It belongs to the universal ribosomal protein uL24 family. Part of the 50S ribosomal subunit. Post-translationally, a methylated and unmethylated form are thought to exist.

In terms of biological role, one of two assembly initiator proteins, it binds directly to the 5'-end of the 23S rRNA, where it nucleates assembly of the 50S subunit. Functionally, one of the proteins that surrounds the polypeptide exit tunnel on the outside of the subunit. This is Large ribosomal subunit protein uL24 from Rhodopseudomonas palustris (strain ATCC BAA-98 / CGA009).